The chain runs to 385 residues: Tryptophan--tRNA ligase (385 aa).

The short motif at 82–90 is the 'HIGH' region element; the sequence is PSGPMHIGH. The short motif at 253 to 257 is the 'KMSKS' region element; the sequence is KMSAS.

It belongs to the class-I aminoacyl-tRNA synthetase family.

It is found in the cytoplasm. The enzyme catalyses tRNA(Trp) + L-tryptophan + ATP = L-tryptophyl-tRNA(Trp) + AMP + diphosphate + H(+). This Pyrococcus furiosus (strain ATCC 43587 / DSM 3638 / JCM 8422 / Vc1) protein is Tryptophan--tRNA ligase.